A 174-amino-acid polypeptide reads, in one-letter code: RNA pyrophosphohydrolase (174 aa).

A Nudix hydrolase domain is found at 6–149 (GFRANVGIII…KRDVYRKVMK (144 aa)). The Nudix box motif lies at 38–59 (GGVDDGESAEEAMYRELYEEVG).

This sequence belongs to the Nudix hydrolase family. RppH subfamily. A divalent metal cation serves as cofactor.

Functionally, accelerates the degradation of transcripts by removing pyrophosphate from the 5'-end of triphosphorylated RNA, leading to a more labile monophosphorylated state that can stimulate subsequent ribonuclease cleavage. In Shewanella sp. (strain W3-18-1), this protein is RNA pyrophosphohydrolase.